We begin with the raw amino-acid sequence, 417 residues long: Neuropeptide FF receptor 2 (417 aa).

Over 1 to 45 (MGKRWDSNSSGSWDHIWSGNDTQHPWYSDINITYMNYYLHQPHVT) the chain is Extracellular. Asn8, Asn20, and Asn31 each carry an N-linked (GlcNAc...) asparagine glycan. A helical membrane pass occupies residues 46–66 (AVFISSYFLIFFLCMVGNTVV). The Cytoplasmic segment spans residues 67 to 82 (CFVVIRNRYMHTVTNF). Residues 83–103 (FIFNLAISDLLVGIFCMPITL) traverse the membrane as a helical segment. Over 104–119 (LDNIIAGWPFGSSMCK) the chain is Extracellular. A disulfide bridge connects residues Cys118 and Cys206. A helical membrane pass occupies residues 120-140 (ISGLVQGISVAASVFTLVAIA). Residues 141–160 (VDRFRCVVYPFKPKLTVKTA) lie on the Cytoplasmic side of the membrane. Residues 161–181 (FVMIVIIWGLAITIMTPSAIM) form a helical membrane-spanning segment. The Extracellular segment spans residues 182-217 (LHVQEEKYYRVRLSSHNKTSTVYWCREDWPNQEMRR). N-linked (GlcNAc...) asparagine glycosylation occurs at Asn198. A helical membrane pass occupies residues 218 to 238 (IYTTVLFATIYLAPLSLIVIM). At 239-274 (YARIGASLFKTSAHSTGKQRLEQWHVSKKKQKVIKM) the chain is on the cytoplasmic side. Residues 275 to 295 (LLTVALLFILSWLPLWTLMML) form a helical membrane-spanning segment. Residues 296 to 310 (SDYADLSPNKLRVIN) are Extracellular-facing. The chain crosses the membrane as a helical span at residues 311-331 (IYVYPFAHWLAFCNSSVNPII). The Cytoplasmic portion of the chain corresponds to 332 to 417 (YGFFNENFRS…TGEATNSTET (86 aa)). Residues 378–417 (HEPASQNPSGENLGCRKSADNPTQESLMEETGEATNSTET) form a disordered region.

The protein belongs to the G-protein coupled receptor 1 family.

Its subcellular location is the cell membrane. Functionally, receptor for NPAF (A-18-F-amide) and NPFF (F-8-F-amide) neuropeptides, also known as morphine-modulating peptides. Can also be activated by a variety of naturally occurring or synthetic FMRF-amide like ligands. This receptor mediates its action by association with G proteins that activate a phosphatidylinositol-calcium second messenger system. This Rattus norvegicus (Rat) protein is Neuropeptide FF receptor 2 (Npffr2).